The chain runs to 77 residues: Small ribosomal subunit protein bS20 (77 aa).

The protein belongs to the bacterial ribosomal protein bS20 family.

Binds directly to 16S ribosomal RNA. The chain is Small ribosomal subunit protein bS20 from Lactococcus lactis subsp. lactis (strain IL1403) (Streptococcus lactis).